The chain runs to 199 residues: Glycerol-3-phosphate acyltransferase (199 aa).

The next 5 helical transmembrane spans lie at 5–25, 51–71, 79–99, 112–132, and 153–173; these read AFLV…VALV, KLGV…VLCA, VFLS…VFLY, VFLG…VAVI, and CAWL…GLVI.

The protein belongs to the PlsY family. As to quaternary structure, probably interacts with PlsX.

The protein localises to the cell inner membrane. The enzyme catalyses an acyl phosphate + sn-glycerol 3-phosphate = a 1-acyl-sn-glycero-3-phosphate + phosphate. Its pathway is lipid metabolism; phospholipid metabolism. Functionally, catalyzes the transfer of an acyl group from acyl-phosphate (acyl-PO(4)) to glycerol-3-phosphate (G3P) to form lysophosphatidic acid (LPA). This enzyme utilizes acyl-phosphate as fatty acyl donor, but not acyl-CoA or acyl-ACP. The sequence is that of Glycerol-3-phosphate acyltransferase from Solidesulfovibrio magneticus (strain ATCC 700980 / DSM 13731 / RS-1) (Desulfovibrio magneticus).